A 422-amino-acid polypeptide reads, in one-letter code: UDP-N-acetylglucosamine 1-carboxyvinyltransferase (422 aa).

23 to 24 lines the phosphoenolpyruvate pocket; sequence KN. R92 serves as a coordination point for UDP-N-acetyl-alpha-D-glucosamine. C116 (proton donor) is an active-site residue. C116 carries the post-translational modification 2-(S-cysteinyl)pyruvic acid O-phosphothioketal. Residues 121 to 125, 161 to 164, D306, and I328 contribute to the UDP-N-acetyl-alpha-D-glucosamine site; these read RPVDL and KVSV.

It belongs to the EPSP synthase family. MurA subfamily.

It localises to the cytoplasm. It catalyses the reaction phosphoenolpyruvate + UDP-N-acetyl-alpha-D-glucosamine = UDP-N-acetyl-3-O-(1-carboxyvinyl)-alpha-D-glucosamine + phosphate. It functions in the pathway cell wall biogenesis; peptidoglycan biosynthesis. Its function is as follows. Cell wall formation. Adds enolpyruvyl to UDP-N-acetylglucosamine. In Aliivibrio salmonicida (strain LFI1238) (Vibrio salmonicida (strain LFI1238)), this protein is UDP-N-acetylglucosamine 1-carboxyvinyltransferase.